Here is a 319-residue protein sequence, read N- to C-terminus: High mobility group B protein 10 (319 aa).

The span at 1 to 13 (MSTDISPPYSQTH) shows a compositional bias: polar residues. The segment at 1–25 (MSTDISPPYSQTHVEPVNGYPSDNK) is disordered. In terms of domain architecture, ARID spans 40–131 (VRNSALFWEK…FLFQLEHVYY (92 aa)). Positions 203 to 220 (PSQSQQTMETPSAIVQSS) are enriched in polar residues. The tract at residues 203–230 (PSQSQQTMETPSAIVQSSQRRHRKKSKL) is disordered. Positions 238-305 (PKCHRSGYNF…RYRIEMLEYK (68 aa)) form a DNA-binding region, HMG box.

Ubiquitously expressed.

It is found in the nucleus. Binds preferentially DNA with A/T-rich content. The protein is High mobility group B protein 10 (HMGB10) of Arabidopsis thaliana (Mouse-ear cress).